The chain runs to 161 residues: Nodulation protein N (161 aa).

The region spanning 9–133 (VPSRIGQELG…LVTTYEVTVE (125 aa)) is the MaoC-like domain.

It to the R.meliloti counterpart.

Functionally, involved in the production of the root hair deformation (HAD) factor specifically on medicago. This is Nodulation protein N (nodN) from Rhizobium leguminosarum bv. viciae.